A 199-amino-acid chain; its full sequence is Probable thymidylate kinase (199 aa).

Residue 7-14 participates in ATP binding; that stretch reads GLDGSGKT.

Belongs to the thymidylate kinase family.

It catalyses the reaction dTMP + ATP = dTDP + ADP. The protein is Probable thymidylate kinase of Halobacterium salinarum (strain ATCC 29341 / DSM 671 / R1).